Here is an 89-residue protein sequence, read N- to C-terminus: Large ribosomal subunit protein bL28 (89 aa).

The protein belongs to the bacterial ribosomal protein bL28 family.

The sequence is that of Large ribosomal subunit protein bL28 from Chlamydia pneumoniae (Chlamydophila pneumoniae).